Reading from the N-terminus, the 242-residue chain is Urease accessory protein UreF (242 aa).

The protein belongs to the UreF family. As to quaternary structure, ureD, UreF and UreG form a complex that acts as a GTP-hydrolysis-dependent molecular chaperone, activating the urease apoprotein by helping to assemble the nickel containing metallocenter of UreC. The UreE protein probably delivers the nickel.

It localises to the cytoplasm. Required for maturation of urease via the functional incorporation of the urease nickel metallocenter. The chain is Urease accessory protein UreF from Bradyrhizobium diazoefficiens (strain JCM 10833 / BCRC 13528 / IAM 13628 / NBRC 14792 / USDA 110).